The following is a 174-amino-acid chain: Endoribonuclease YbeY (174 aa).

Zn(2+)-binding residues include histidine 124, histidine 128, and histidine 134.

This sequence belongs to the endoribonuclease YbeY family. The cofactor is Zn(2+).

Its subcellular location is the cytoplasm. Single strand-specific metallo-endoribonuclease involved in late-stage 70S ribosome quality control and in maturation of the 3' terminus of the 16S rRNA. The sequence is that of Endoribonuclease YbeY from Synechococcus elongatus (strain ATCC 33912 / PCC 7942 / FACHB-805) (Anacystis nidulans R2).